Reading from the N-terminus, the 230-residue chain is uncharacterized protein (230 aa).

Positions 118 to 195 (LLDEILPKEP…SKREMERLER (78 aa)) are disordered. Positions 136–146 (QKKKEKRAALK) are enriched in basic residues. Composition is skewed to basic and acidic residues over residues 160–170 (ETDLYGDRDSF) and 179–195 (QRSE…RLER).

This is an uncharacterized protein from Schizosaccharomyces pombe (strain 972 / ATCC 24843) (Fission yeast).